A 248-amino-acid chain; its full sequence is MKLTFFLGLLALISCFTPSESQRFSRRPYLPGQLPPPPLYRPRWVPPSPPPPYDSRLNSPLSLPFVPGRVPPSSFSRFSQAVILSQLFPLESIRQPRLFPGYPNLHFPLRPYYVGPIRILKPPFPPIPFFLAIYLPISNPEPQINITTADTTITTNPPTTATATTSTSTKPTMTISSSTVPISSTPEPATSISAATPAASTENTTQILANRPHTVLLNATVQVTTSNQTILSSPAFKSFWQKLFAIFG.

The N-terminal stretch at 1–21 is a signal peptide; the sequence is MKLTFFLGLLALISCFTPSES. Pyrrolidone carboxylic acid is present on Q22. Positions 150–198 are disordered; that stretch reads DTTITTNPPTTATATTSTSTKPTMTISSSTVPISSTPEPATSISAATPA. N-linked (GlcNAc...) asparagine glycosylation is present at N218.

Belongs to the PROL1/PROL3 family. Abundantly expressed in lacrimal gland where it found in the secretory endpieces. Also expressed at modest levels in the submandibular gland.

It is found in the secreted. Opiorphin is an endogenous inhibitor of neprilysin and aminopeptidase N. Inhibits the breakdown of substance P, Mca-BK2 and Met-enkephalin by neprilysin in vitro with IC(50) values of 29 uM, 33 uM and 33 uM respectively. Inhibits the breakdown of Ala-pNA by aminopeptidase N in vitro with an IC(50) of 65 uM. Has a potent analgesic effect when administered to rats by intravenous injection. In Homo sapiens (Human), this protein is Opiorphin prepropeptide.